The sequence spans 53 residues: Neuronal protein NP-190 (53 aa).

In terms of tissue distribution, mainly expressed in the fetal brain where it is specifically localized to the proximal axonal segments, cell bodies and growth cones. Lower level of expression was also detected in the fetal heart and the skeletal muscle. No expression in kidney, liver, lung or spleen.

The protein resides in the membrane. Neuronal antigen that may play a role in brain development. May be involved in neurite formation or axonal guidance. In Sus scrofa (Pig), this protein is Neuronal protein NP-190.